A 1905-amino-acid chain; its full sequence is Low-density lipoprotein receptor-related protein 4 (1905 aa).

The N-terminal stretch at 1-20 (MRRWWGALLLGALLCAHGTA) is a signal peptide. Residues 21–1723 (SNLECACGRS…VPAAPGEGLH (1703 aa)) are Extracellular-facing. LDL-receptor class A domains lie at 26–67 (ACGR…DGCT), 70–106 (TCSPLDFHCDNGKCIRRSWVCDGDNDCEDDSDEQDCP), 109–144 (ECEEDEFPCQNGYCIRSLWHCDGDNDCGDNSDEQCD), 147–183 (KCSDKEFRCSDGSCIAEHWYCDGDTDCKDGSDEESCP), 190–226 (PCNLEEFQCAYGRCILDIYHCDGDDDCGDWSDESDCS), 230–266 (PCRSGEFMCDSGLCVNAGWRCDGDADCDDQSDERNCT), 269–305 (MCTAEQFRCRSGRCVRLSWRCDGEDDCADNSDEENCE), and 311–350 (QCASDQFLCWNGRCIGQRKLCNGVNDCGDNSDESPQQNCR). Disulfide bonds link C27-C44, C34-C57, C51-C66, C71-C83, C78-C96, C90-C105, C110-C122, C117-C135, C129-C143, C148-C160, C155-C173, C167-C182, C191-C203, C198-C216, C210-C225, C231-C243, C238-C256, C250-C265, C270-C282, C277-C295, C289-C304, C312-C324, C319-C337, C331-C349, C358-C369, C365-C378, C380-C393, C399-C409, C405-C418, and C420-C433. N-linked (GlcNAc...) asparagine glycosylation is present at N264. The EGF-like 1; atypical domain occupies 354 to 394 (GEENCNVNNGGCAQKCQMIRGAVQCTCHTGYRLTEDGRTCQ). An EGF-like 2; calcium-binding domain is found at 395–434 (DVNECAEEGYCSQGCTNSEGAFQCWCEAGYELRPDRRSCK). 5 LDL-receptor class B repeats span residues 480 to 522 (ELVF…DWVH), 523 to 565 (DKLY…HPME), 566 to 609 (GTIY…DYAG), 610 to 652 (RRMY…FEDS), and 653 to 693 (LYWT…LHPQ). A glycan (N-linked (GlcNAc...) asparagine) is linked at N498. In terms of domain architecture, EGF-like 3 spans 698–737 (GKNRCGDNNGGCTHLCLPSGQNYTCACPTGFRKINSHACA). Disulfide bonds link C702–C713, C709–C722, and C724–C736. Residue N719 is glycosylated (N-linked (GlcNAc...) asparagine). LDL-receptor class B repeat units follow at residues 785–827 (DHVY…DWVT), 828–870 (NKLY…EPMG), 871–914 (GYMY…DYGS), 915–956 (QRLY…LYGQ), and 957–998 (RIYW…FHRQ). N-linked (GlcNAc...) asparagine glycosylation is present at N901. An N-linked (GlcNAc...) asparagine glycan is attached at N1077. 10 LDL-receptor class B repeats span residues 1093-1135 (GKVY…DAIG), 1136-1178 (RKVY…YHEM), 1179-1222 (GFMY…DKTS), 1223-1263 (SQLL…LLDS), 1264-1306 (YIYW…DRAQ), 1397-1439 (GKVY…DWVA), 1440-1482 (RNLY…FPRK), 1483-1526 (GYLF…DYDT), 1527-1568 (RRIY…QDRW), and 1569-1610 (IYWT…SPQR). N-linked (GlcNAc...) asparagine glycans are attached at residues N1415 and N1467. The disordered stretch occupies residues 1659–1696 (PRATSLNEKSPVLPNTLPTTLHSSTTRTRTSPEGAEGR). A compositionally biased stretch (low complexity) spans 1671–1690 (LPNTLPTTLHSSTTRTRTSP). The helical transmembrane segment at 1724–1746 (VSYAVGGLLSVLLILLVTAALML) threads the bilayer. The Cytoplasmic segment spans residues 1747-1905 (YRHRKSKFTD…ERKLSSESQV (159 aa)). A disordered region spans residues 1853–1905 (SSGSLDDTETEQLLQEEQSECSSVHTATTPERRGSLPDTGWKHERKLSSESQV). Residues 1872–1881 (ECSSVHTATT) show a composition bias toward polar residues. Residues 1882-1905 (PERRGSLPDTGWKHERKLSSESQV) show a composition bias toward basic and acidic residues.

The protein belongs to the LDLR family. In terms of assembly, homooligomer. Interacts with MUSK; the heterodimer forms an AGRIN receptor complex that binds AGRIN resulting in activation of MUSK. Interacts (via the extracellular domain) with SOST; the interaction facilitates the inhibition of Wnt signaling. Interacts with MESD; the interaction promotes glycosylation of LRP4 and its cell-surface expression. N-glycosylation is required for cell surface location. In terms of tissue distribution, expressed in different regions of the brain, mainly in the olfactory bulb, at lower level in the cerebral cortex and hippocampus.

It is found in the cell membrane. Functionally, mediates SOST-dependent inhibition of bone formation. Functions as a specific facilitator of SOST-mediated inhibition of Wnt signaling. Plays a key role in the formation and the maintenance of the neuromuscular junction (NMJ), the synapse between motor neuron and skeletal muscle. Directly binds AGRIN and recruits it to the MUSK signaling complex. Mediates the AGRIN-induced phosphorylation of MUSK, the kinase of the complex. The activation of MUSK in myotubes induces the formation of NMJ by regulating different processes including the transcription of specific genes and the clustering of AChR in the postsynaptic membrane. Alternatively, may be involved in the negative regulation of the canonical Wnt signaling pathway, being able to antagonize the LRP6-mediated activation of this pathway. More generally, has been proposed to function as a cell surface endocytic receptor binding and internalizing extracellular ligands for degradation by lysosomes. Plays an essential role in the process of digit differentiation. This chain is Low-density lipoprotein receptor-related protein 4 (Lrp4), found in Rattus norvegicus (Rat).